The chain runs to 1300 residues: uncharacterized protein (1300 aa).

The signal sequence occupies residues 1-26; it reads MGYKLKRWPLVAFTFTGIGLGVVLAA. C27 carries the N-palmitoyl cysteine lipid modification. The S-diacylglycerol cysteine moiety is linked to residue C27. Residues 464–478 are compositionally biased toward low complexity; sequence AMAAASTGADSSSGT. 4 disordered regions span residues 464–487, 620–639, 774–797, and 1244–1269; these read AMAAASTGADSSSGTNVGGSSGGN, ASVSVQTTQQNRQQSTDTQE, DSQKSTNTVKQPDIKPTRENNDKK, and KMSDSSSSSQGTKTIRKPKPHHSPRT. 2 stretches are compositionally biased toward polar residues: residues 620-637 and 774-783; these read ASVSVQTTQQNRQQSTDT and DSQKSTNTVK. A compositionally biased stretch (basic and acidic residues) spans 785–797; sequence PDIKPTRENNDKK. The segment covering 1257–1269 has biased composition (basic residues); sequence TIRKPKPHHSPRT.

It belongs to the MG307/MG309/MG338 family.

The protein resides in the cell membrane. This is an uncharacterized protein from Mycoplasma pneumoniae (strain ATCC 29342 / M129 / Subtype 1) (Mycoplasmoides pneumoniae).